Here is a 263-residue protein sequence, read N- to C-terminus: Lens fiber major intrinsic protein (263 aa).

Over 1–9 the chain is Cytoplasmic; sequence MWELRSASF. Residues 10-29 form a helical membrane-spanning segment; it reads WRAIFAEFFATLFYVFFGLG. Residues 30-41 lie on the Extracellular side of the membrane; the sequence is SSLRWAPGPLHV. Residues 42-59 traverse the membrane as a helical segment; it reads LQVAMAFGLALATLVQSV. Over 60 to 61 the chain is Cytoplasmic; sequence GH. Positions 62 to 77 form an intramembrane region, discontinuously helical; that stretch reads ISGAHVNPAVTFAFLV. The NPA 1 signature appears at 68–70; that stretch reads NPA. Over 78 to 82 the chain is Cytoplasmic; sequence GSQMS. The helical transmembrane segment at 83 to 106 threads the bilayer; that stretch reads LLRAFCYMAAQLLGAVAGAAVLYS. Residues 107–127 lie on the Extracellular side of the membrane; the sequence is VTPPAVRGNLALNTLHPAVSV. A helical transmembrane segment spans residues 128 to 148; sequence GQATTVEIFLTLQFVLCIFAT. Over 149–156 the chain is Cytoplasmic; that stretch reads YDERRNGQ. Residues 157–175 traverse the membrane as a helical segment; that stretch reads LGSVALAVGFSLALGHLFG. The Extracellular portion of the chain corresponds to 176-178; it reads MYY. The discontinuously helical intramembrane region spans 179–193; it reads TGAGMNPARSFAPAI. The NPA 2 signature appears at 184-186; it reads NPA. At 194–200 the chain is on the extracellular side; that stretch reads LTGNFTN. The chain crosses the membrane as a helical span at residues 201–222; that stretch reads HWVYWVGPIIGGGLGSLLYDFL. The Cytoplasmic portion of the chain corresponds to 223–263; that stretch reads LFPRLKSISERLSVLKGAKPDVSNGQPEVTGEPVELNTQAL. The segment at 227–237 is interaction with CALM; sequence LKSISERLSVL. A phosphoserine mark is found at Ser-235 and Ser-245. Asn-246 and Asn-259 each carry deamidated asparagine; by deterioration.

It belongs to the MIP/aquaporin (TC 1.A.8) family. Homotetramer; each monomer provides an independent water pore. Two homotetramers on opposing membranes can dimerize, forming a cell-cell junction. Interacts with CALM; the calcium-calmodulin/CALM complex interacts with the cytoplasmic domains of two aquaporins, leading to channel closure. Interacts with BFSP1 (via C-terminus); prevents calcium-dependent inhibition of the water channel activity. In terms of processing, subject to partial proteolytic cleavage in the eye lens core. Partial proteolysis promotes interactions between tetramers from adjoining membranes. Fatty acylated at Met-1 and Lys-238. The acyl modifications, in decreasing order of ion abundance, are: oleoyl (C18:1) &gt; palmitoyl (C16:0) &gt; stearoyl (C18:0) &gt; eicosenoyl (C20:1) &gt; dihomo-gamma-linolenoyl (C20:3) &gt; palmitoleoyl (C16:1) &gt; eicosadienoyl (C20:2). As to expression, expressed in the cortex and nucleus of the retina lens (at protein level). Major component of lens fiber gap junctions.

It localises to the cell membrane. It is found in the cell junction. It carries out the reaction H2O(in) = H2O(out). The water channel activity is inhibited by calcium through calmodulin/CALM. Functionally, aquaporins form homotetrameric transmembrane channels, with each monomer independently mediating water transport across the plasma membrane along its osmotic gradient. Specifically expressed in lens fiber cells, this aquaporin is crucial for maintaining lens water homeostasis and transparency. Beyond water permeability, it also acts as a cell-to-cell adhesion molecule, forming thin junctions between lens fiber cells that are essential for maintaining the ordered structure and transparency of the lens. The protein is Lens fiber major intrinsic protein of Homo sapiens (Human).